The primary structure comprises 229 residues: Potassium/proton antiporter CemA (229 aa).

2 helical membrane-spanning segments follow: residues 7–27 and 107–127; these read FTPL…SFSV and ILHF…SILG.

This sequence belongs to the CemA family.

Its subcellular location is the plastid. It localises to the chloroplast inner membrane. It catalyses the reaction K(+)(in) + H(+)(out) = K(+)(out) + H(+)(in). Contributes to K(+)/H(+) antiport activity by supporting proton efflux to control proton extrusion and homeostasis in chloroplasts in a light-dependent manner to modulate photosynthesis. Prevents excessive induction of non-photochemical quenching (NPQ) under continuous-light conditions. Indirectly promotes efficient inorganic carbon uptake into chloroplasts. The chain is Potassium/proton antiporter CemA from Solanum tuberosum (Potato).